A 262-amino-acid polypeptide reads, in one-letter code: Ornithine carbamoyltransferase (262 aa).

Carbamoyl phosphate is bound by residues serine 3–arginine 7, glutamine 30, arginine 54, and histidine 81–glutamine 84. L-ornithine contacts are provided by residues asparagine 114, aspartate 178, and serine 182–methionine 183. Carbamoyl phosphate is bound by residues histidine 219 to proline 222 and threonine 247.

Belongs to the aspartate/ornithine carbamoyltransferase superfamily. OTCase family.

It localises to the cytoplasm. The enzyme catalyses carbamoyl phosphate + L-ornithine = L-citrulline + phosphate + H(+). It participates in amino-acid biosynthesis; L-arginine biosynthesis; L-arginine from L-ornithine and carbamoyl phosphate: step 1/3. Reversibly catalyzes the transfer of the carbamoyl group from carbamoyl phosphate (CP) to the N(epsilon) atom of ornithine (ORN) to produce L-citrulline. The polypeptide is Ornithine carbamoyltransferase (argF) (Neisseria polysaccharea).